The primary structure comprises 185 residues: Threonylcarbamoyl-AMP synthase (185 aa).

The 182-residue stretch at 4 to 185 (SWRVQQAAQD…IATGQVMRAG (182 aa)) folds into the YrdC-like domain.

The protein belongs to the SUA5 family. TsaC subfamily.

Its subcellular location is the cytoplasm. The catalysed reaction is L-threonine + hydrogencarbonate + ATP = L-threonylcarbamoyladenylate + diphosphate + H2O. Functionally, required for the formation of a threonylcarbamoyl group on adenosine at position 37 (t(6)A37) in tRNAs that read codons beginning with adenine. Catalyzes the conversion of L-threonine, HCO(3)(-)/CO(2) and ATP to give threonylcarbamoyl-AMP (TC-AMP) as the acyladenylate intermediate, with the release of diphosphate. The polypeptide is Threonylcarbamoyl-AMP synthase (Pseudomonas savastanoi pv. phaseolicola (strain 1448A / Race 6) (Pseudomonas syringae pv. phaseolicola (strain 1448A / Race 6))).